An 878-amino-acid polypeptide reads, in one-letter code: Phosphoenolpyruvate carboxylase (878 aa).

Residues His137 and Lys545 contribute to the active site.

The protein belongs to the PEPCase type 1 family. It depends on Mg(2+) as a cofactor.

The enzyme catalyses oxaloacetate + phosphate = phosphoenolpyruvate + hydrogencarbonate. Its function is as follows. Forms oxaloacetate, a four-carbon dicarboxylic acid source for the tricarboxylic acid cycle. This Photorhabdus laumondii subsp. laumondii (strain DSM 15139 / CIP 105565 / TT01) (Photorhabdus luminescens subsp. laumondii) protein is Phosphoenolpyruvate carboxylase.